The following is a 647-amino-acid chain: Threonine--tRNA ligase (647 aa).

The TGS domain occupies methionine 1–threonine 61. The catalytic stretch occupies residues aspartate 242–proline 540. Residues cysteine 336, histidine 387, and histidine 517 each contribute to the Zn(2+) site.

It belongs to the class-II aminoacyl-tRNA synthetase family. Homodimer. Requires Zn(2+) as cofactor.

The protein localises to the cytoplasm. It carries out the reaction tRNA(Thr) + L-threonine + ATP = L-threonyl-tRNA(Thr) + AMP + diphosphate + H(+). In terms of biological role, catalyzes the attachment of threonine to tRNA(Thr) in a two-step reaction: L-threonine is first activated by ATP to form Thr-AMP and then transferred to the acceptor end of tRNA(Thr). Also edits incorrectly charged L-seryl-tRNA(Thr). This is Threonine--tRNA ligase from Streptococcus sanguinis (strain SK36).